Consider the following 306-residue polypeptide: Ribokinase (306 aa).

Substrate contacts are provided by residues 12 to 14 (NAD), 40 to 44 (GKGAN), and glutamate 141. Residues asparagine 185 and 221–226 (TLGAKG) each bind ATP. Aspartate 247 and threonine 249 together coordinate K(+). An ATP-binding site is contributed by 252 to 253 (GD). Aspartate 253 provides a ligand contact to substrate. Residue aspartate 253 is the Proton acceptor of the active site. K(+) is bound by residues serine 283, lysine 286, glycine 288, and serine 292.

This sequence belongs to the carbohydrate kinase PfkB family. Ribokinase subfamily. In terms of assembly, homodimer. The cofactor is Mg(2+).

Its subcellular location is the cytoplasm. It carries out the reaction D-ribose + ATP = D-ribose 5-phosphate + ADP + H(+). The protein operates within carbohydrate metabolism; D-ribose degradation; D-ribose 5-phosphate from beta-D-ribopyranose: step 2/2. Its activity is regulated as follows. Activated by a monovalent cation that binds near, but not in, the active site. The most likely occupant of the site in vivo is potassium. Ion binding induces a conformational change that may alter substrate affinity. Functionally, catalyzes the phosphorylation of ribose at O-5 in a reaction requiring ATP and magnesium. The resulting D-ribose-5-phosphate can then be used either for sythesis of nucleotides, histidine, and tryptophan, or as a component of the pentose phosphate pathway. The chain is Ribokinase from Haemophilus influenzae (strain ATCC 51907 / DSM 11121 / KW20 / Rd).